Here is a 332-residue protein sequence, read N- to C-terminus: MALLCYNRGCGQRFDPETNSDDACTYHPGVPVFHDALKGWSCCKRRTTDFSDFLSIVGCTKGRHNSEKPPESVKPEVKTTEKKELSELKPKFQEHIIQAPKPVEAIKRPSPDEPMTNLELKISASLKQALDKLKLSSGNEENKKEEDNDEIKIGTSCKNGGCSKTYRGLESLEEVCVYHSGVPISHEGMKYWSCCRRKTSDFNTFLAQEGCTKGKHMWTKKDAGKKVVPCRHDWHQTGGEVTISVYAKNSLPELSRVEANSTLLNVHIVFEGEKEFEQNVKLWGVIDVKRSYVTMTATKIEITMRKAEPMQWASLELPAAKKQEKQKDDTTD.

Residue alanine 2 is modified to N-acetylalanine. Residues 2–77 are interaction with PPP5C; that stretch reads ALLCYNRGCG…KPPESVKPEV (76 aa). Zn(2+) contacts are provided by cysteine 5, cysteine 10, cysteine 24, histidine 27, cysteine 42, and cysteine 43. CHORD domains follow at residues 5–64 and 157–216; these read CYNR…KGRH and CKNG…KGKH. Threonine 47 is subject to Phosphothreonine. At serine 51 the chain carries Phosphoserine. Residues cysteine 59, histidine 64, cysteine 157, cysteine 162, cysteine 176, histidine 179, cysteine 194, cysteine 195, cysteine 211, and histidine 216 each coordinate Zn(2+). Residues 62-81 are disordered; that stretch reads GRHNSEKPPESVKPEVKTTE. Positions 64 to 81 are enriched in basic and acidic residues; it reads HNSEKPPESVKPEVKTTE. Residues 65-316 form an interaction with HSP90AA1 and HSP90AB1 region; sequence NSEKPPESVK…AEPMQWASLE (252 aa). One can recognise a CS domain in the interval 227–316; that stretch reads VVPCRHDWHQ…AEPMQWASLE (90 aa).

As to quaternary structure, interacts with HSP90AA1, HSP90AB1, PPP5C, ROCK1 and ROCK2.

In terms of biological role, regulates centrosome duplication, probably by inhibiting the kinase activity of ROCK2. Proposed to act as co-chaperone for HSP90. May play a role in the regulation of NOD1 via a HSP90 chaperone complex. In vitro, has intrinsic chaperone activity. This function may be achieved by inhibiting association of ROCK2 with NPM1. Plays a role in ensuring the localization of the tyrosine kinase receptor EGFR to the plasma membrane, and thus ensures the subsequent regulation of EGFR activity and EGF-induced actin cytoskeleton remodeling. Involved in stress response. Prevents tumorigenesis. This chain is Cysteine and histidine-rich domain-containing protein 1 (CHORDC1), found in Pongo abelii (Sumatran orangutan).